Reading from the N-terminus, the 120-residue chain is Myohemerythrin (120 aa).

His26, His56, Glu60, His75, His79, His108, and Asp113 together coordinate Fe cation.

Belongs to the hemerythrin family.

Myohemerythrin is an oxygen-binding protein found in the retractor muscles of certain worms. The oxygen-binding site contains two iron atoms. The chain is Myohemerythrin from Riftia pachyptila (Vent tube worm).